Consider the following 883-residue polypeptide: Phosphoenolpyruvate carboxylase (883 aa).

Catalysis depends on residues His-138 and Lys-546.

It belongs to the PEPCase type 1 family. Mg(2+) is required as a cofactor.

The catalysed reaction is oxaloacetate + phosphate = phosphoenolpyruvate + hydrogencarbonate. Functionally, forms oxaloacetate, a four-carbon dicarboxylic acid source for the tricarboxylic acid cycle. The sequence is that of Phosphoenolpyruvate carboxylase from Escherichia coli O7:K1 (strain IAI39 / ExPEC).